The sequence spans 1087 residues: Voltage-gated inwardly rectifying potassium channel KCNH3 (1087 aa).

At 1–228 the chain is on the cytoplasmic side; sequence MPAMRGLLAP…HCGALRATWD (228 aa). Residues 18–90 form the PAS domain; that stretch reads IATRFDGTHS…QQIRKALDEH (73 aa). In terms of domain architecture, PAC spans 93 to 145; sequence FKAELILYRKSGLPFWCLLDVIPIKNEKGEVALFLVSHKDISETKNRGGPDNW. The segment covering 137–150 has biased composition (basic and acidic residues); it reads KNRGGPDNWKERGG. Residues 137 to 161 form a disordered region; the sequence is KNRGGPDNWKERGGGRRRYGRAGSK. The helical transmembrane segment at 229–249 threads the bilayer; sequence GFILLATLYVAVTVPYSVCVS. The Extracellular segment spans residues 250 to 259; that stretch reads TAREPSAARG. Residues 260-280 traverse the membrane as a helical segment; it reads PPSVCDLAVEVLFILDIVLNF. At 281–302 the chain is on the cytoplasmic side; sequence RTTFVSKSGQVVFAPKSICLHY. The helical transmembrane segment at 303-323 threads the bilayer; that stretch reads VTTWFLLDVIAALPFDLLHAF. At 324 to 331 the chain is on the extracellular side; it reads KVNVYVGA. A helical; Voltage-sensor transmembrane segment spans residues 332–352; sequence HLLKTVRLLRLLRLLPRLDRY. The Cytoplasmic segment spans residues 353–361; it reads SQYSAVVLT. A helical transmembrane segment spans residues 362-382; that stretch reads LLMAVFALLAHWVACVWFYIG. The Extracellular segment spans residues 383-456; the sequence is QQEIENSESE…GGPSLRSAYI (74 aa). The segment at 416–436 is disordered; it reads SPDGGNSSGQSENCSSSGGGS. A compositionally biased stretch (low complexity) spans 419 to 431; it reads GGNSSGQSENCSS. Asparagine 421, asparagine 428, and asparagine 439 each carry an N-linked (GlcNAc...) asparagine glycan. An intramembrane region (pore-forming) is located at residues 457-477; the sequence is TSLYFALSSLTSVGFGNVSAN. Residues 468–473 carry the Selectivity filter motif; the sequence is SVGFGN. Residues 478–482 are Extracellular-facing; the sequence is TDTEK. The chain crosses the membrane as a helical span at residues 483 to 503; sequence IFSICTMLIGALMHAVVFGNV. The Cytoplasmic portion of the chain corresponds to 504–1087; sequence TAIIQRMYAR…QWTQEEGTGV (584 aa). 585–700 provides a ligand contact to a nucleoside 3',5'-cyclic phosphate; sequence LFEAASRGCL…FAPRFSRGLR (116 aa). 2 disordered regions span residues 733–813 and 975–1061; these read EKET…LQLP and LMAP…PWDP. Basic residues predominate over residues 776 to 788; sequence TAPRPRLGGRGRP.

It belongs to the potassium channel family. H (Eag) (TC 1.A.1.20) subfamily. Kv12.2/KCNH3 sub-subfamily. The potassium channel is probably composed of a homo- or heterotetrameric complex of pore-forming alpha subunits that can associate with modulating beta subunits. Interacts with KCNE1 and KCNE3; these interactions regulate KCNH3 trafficking to the plasma membrane and its subsequent voltage-gated potassium channel activity. N-glycosylated. N-glycosylation mediates traffick to the cell membrane but is not necessary for voltage-gated potassium channel activity. Highly expressed in adult and embryonic brain, in particular in cerebellum, brain stem, hippocampus, cortex and striatum. Also found in pituitary.

Its subcellular location is the cell membrane. It carries out the reaction K(+)(in) = K(+)(out). Its function is as follows. Pore-forming (alpha) subunit of a voltage-gated inwardly rectifying potassium channel. Charactherized by a fast rate of activation during depolarization followed by a rapid inactivation at much more depolarized value causing inward rectification due to a C-type inactivation mechanism. Exhibits a rapid recovery from inactivation. The sequence is that of Voltage-gated inwardly rectifying potassium channel KCNH3 from Rattus norvegicus (Rat).